The following is a 293-amino-acid chain: Oxidoreductase R2 (293 aa).

This sequence belongs to the asaB hydroxylase/desaturase family.

The protein operates within secondary metabolite biosynthesis. In terms of biological role, oxidoreductase; part of the gene cluster that mediates the biosynthesis of squalestatin S1 (SQS1, also known as zaragozic acid A), a heavily oxidized fungal polyketide that offers potent cholesterol lowering activity by targeting squalene synthase (SS). SQS1 is composed of a 2,8-dioxobicyclic[3.2.1]octane-3,4,5-tricarboxyclic acid core that is connected to two lipophilic polyketide arms. These initial steps feature the priming of an unusual benzoic acid starter unit onto the highly reducing polyketide synthase pks2, followed by oxaloacetate extension and product release to generate a tricarboxylic acid containing product. The phenylalanine ammonia lyase (PAL) M7 and the acyl-CoA ligase M9 are involved in transforming phenylalanine into benzoyl-CoA. The citrate synthase-like protein R3 is involved in connecting the C-alpha-carbons of the hexaketide chain and oxaloacetate to afford the tricarboxylic acid unit. The potential hydrolytic enzymes, M8 and M10, are in close proximity to pks2 and may participate in product release. On the other side, the tetraketide arm is synthesized by a the squalestatin tetraketide synthase pks1 and enzymatically esterified to the core in the last biosynthetic step, by the acetyltransferase M4. The biosynthesis of the tetraketide must involve 3 rounds of chain extension. After the first and second rounds methyl-transfer occurs, and in all rounds of extension the ketoreductase and dehydratase are active. The enoyl reductase and C-MeT of pks1 are not active in the final round of extension. The acetyltransferase M4 appears to have a broad substrate selectivity for its acyl CoA substrate, allowing the in vitro synthesis of novel squalestatins. The biosynthesis of SQS1 requires several oxidative steps likely performed by oxidoreductases M1, R1 and R2. Finally, in support of the identification of the cluster as being responsible for SQS1 production, the cluster contains a gene encoding a putative squalene synthase (SS) R6, suggesting a likely mechanism for self-resistance. The protein is Oxidoreductase R2 of Phoma sp. (strain ATCC 20986 / MF5453).